A 381-amino-acid polypeptide reads, in one-letter code: 4-hydroxyphenylpyruvate dioxygenase (381 aa).

VOC domains are found at residues Gly22–Arg156 and Ala184–Lys338. The Fe cation site is built by His187, His270, and Glu349.

The protein belongs to the 4HPPD family. In terms of assembly, homodimer. Fe cation serves as cofactor.

The catalysed reaction is 3-(4-hydroxyphenyl)pyruvate + O2 = homogentisate + CO2. It functions in the pathway amino-acid degradation; L-phenylalanine degradation; acetoacetate and fumarate from L-phenylalanine: step 3/6. The sequence is that of 4-hydroxyphenylpyruvate dioxygenase (hpd) from Streptomyces coelicolor (strain ATCC BAA-471 / A3(2) / M145).